A 342-amino-acid chain; its full sequence is L-threonine 3-dehydrogenase (342 aa).

Zn(2+) is bound at residue Cys38. Active-site charge relay system residues include Thr40 and His43. The Zn(2+) site is built by His63 and Glu64. NAD(+) is bound by residues Ile175, Asp195, Arg200, 263-265, and 287-288; these read LGI and VY.

The protein belongs to the zinc-containing alcohol dehydrogenase family. In terms of assembly, homotetramer. It depends on Zn(2+) as a cofactor.

The protein localises to the cytoplasm. It carries out the reaction L-threonine + NAD(+) = (2S)-2-amino-3-oxobutanoate + NADH + H(+). It participates in amino-acid degradation; L-threonine degradation via oxydo-reductase pathway; glycine from L-threonine: step 1/2. Catalyzes the NAD(+)-dependent oxidation of L-threonine to 2-amino-3-ketobutyrate. The chain is L-threonine 3-dehydrogenase from Ruegeria pomeroyi (strain ATCC 700808 / DSM 15171 / DSS-3) (Silicibacter pomeroyi).